The primary structure comprises 144 residues: Large ribosomal subunit protein uL15 (144 aa).

A disordered region spans residues 1 to 53; it reads MRLNTLSPAQGAKQAPKRVGRGIGSGLGKTGGRGHKGQNSRTGGGVRRGFEGG. The segment covering 21–31 has biased composition (gly residues); it reads RGIGSGLGKTG.

The protein belongs to the universal ribosomal protein uL15 family. As to quaternary structure, part of the 50S ribosomal subunit.

Its function is as follows. Binds to the 23S rRNA. The chain is Large ribosomal subunit protein uL15 from Hamiltonella defensa subsp. Acyrthosiphon pisum (strain 5AT).